The sequence spans 464 residues: ATP synthase subunit beta 2 (464 aa).

147 to 154 contacts ATP; that stretch reads GGAGVGKT.

It belongs to the ATPase alpha/beta chains family. As to quaternary structure, F-type ATPases have 2 components, CF(1) - the catalytic core - and CF(0) - the membrane proton channel. CF(1) has five subunits: alpha(3), beta(3), gamma(1), delta(1), epsilon(1). CF(0) has four main subunits: a(1), b(1), b'(1) and c(9-12).

It is found in the cell inner membrane. It carries out the reaction ATP + H2O + 4 H(+)(in) = ADP + phosphate + 5 H(+)(out). Produces ATP from ADP in the presence of a proton gradient across the membrane. The catalytic sites are hosted primarily by the beta subunits. The protein is ATP synthase subunit beta 2 of Cereibacter sphaeroides (strain ATCC 17023 / DSM 158 / JCM 6121 / CCUG 31486 / LMG 2827 / NBRC 12203 / NCIMB 8253 / ATH 2.4.1.) (Rhodobacter sphaeroides).